Consider the following 336-residue polypeptide: Holliday junction branch migration complex subunit RuvB (336 aa).

The large ATPase domain (RuvB-L) stretch occupies residues 1 to 182; sequence MAKRMITTEL…FGVVHRLEFY (182 aa). ATP contacts are provided by residues L21, R22, G63, K66, T67, T68, 129–131, R172, Y182, and R219; that span reads EDY. Residue T67 participates in Mg(2+) binding. The small ATPAse domain (RuvB-S) stretch occupies residues 183 to 253; that stretch reads TTEELKEIIT…VARFALDILE (71 aa). The segment at 256 to 336 is head domain (RuvB-H); sequence KLGLDHIDRQ…GLPYENKELS (81 aa). Positions 311 and 316 each coordinate DNA.

The protein belongs to the RuvB family. Homohexamer. Forms an RuvA(8)-RuvB(12)-Holliday junction (HJ) complex. HJ DNA is sandwiched between 2 RuvA tetramers; dsDNA enters through RuvA and exits via RuvB. An RuvB hexamer assembles on each DNA strand where it exits the tetramer. Each RuvB hexamer is contacted by two RuvA subunits (via domain III) on 2 adjacent RuvB subunits; this complex drives branch migration. In the full resolvosome a probable DNA-RuvA(4)-RuvB(12)-RuvC(2) complex forms which resolves the HJ.

It is found in the cytoplasm. The catalysed reaction is ATP + H2O = ADP + phosphate + H(+). The RuvA-RuvB-RuvC complex processes Holliday junction (HJ) DNA during genetic recombination and DNA repair, while the RuvA-RuvB complex plays an important role in the rescue of blocked DNA replication forks via replication fork reversal (RFR). RuvA specifically binds to HJ cruciform DNA, conferring on it an open structure. The RuvB hexamer acts as an ATP-dependent pump, pulling dsDNA into and through the RuvAB complex. RuvB forms 2 homohexamers on either side of HJ DNA bound by 1 or 2 RuvA tetramers; 4 subunits per hexamer contact DNA at a time. Coordinated motions by a converter formed by DNA-disengaged RuvB subunits stimulates ATP hydrolysis and nucleotide exchange. Immobilization of the converter enables RuvB to convert the ATP-contained energy into a lever motion, pulling 2 nucleotides of DNA out of the RuvA tetramer per ATP hydrolyzed, thus driving DNA branch migration. The RuvB motors rotate together with the DNA substrate, which together with the progressing nucleotide cycle form the mechanistic basis for DNA recombination by continuous HJ branch migration. Branch migration allows RuvC to scan DNA until it finds its consensus sequence, where it cleaves and resolves cruciform DNA. The polypeptide is Holliday junction branch migration complex subunit RuvB (Lachnoclostridium phytofermentans (strain ATCC 700394 / DSM 18823 / ISDg) (Clostridium phytofermentans)).